The chain runs to 121 residues: Large ribosomal subunit protein uL3 (121 aa).

N5-methylglutamine is present on Gln62.

Belongs to the universal ribosomal protein uL3 family. Part of the 50S ribosomal subunit. Forms a cluster with proteins L14 and L19. In terms of processing, methylated by PrmB.

Functionally, one of the primary rRNA binding proteins, it binds directly near the 3'-end of the 23S rRNA, where it nucleates assembly of the 50S subunit. The polypeptide is Large ribosomal subunit protein uL3 (rplC) (Aggregatibacter actinomycetemcomitans (Actinobacillus actinomycetemcomitans)).